Here is a 418-residue protein sequence, read N- to C-terminus: Serine hydroxymethyltransferase (418 aa).

(6S)-5,6,7,8-tetrahydrofolate-binding positions include leucine 121 and 125 to 127 (GHL). Lysine 230 is modified (N6-(pyridoxal phosphate)lysine). (6S)-5,6,7,8-tetrahydrofolate contacts are provided by residues glutamate 246 and 355–357 (SPF).

The protein belongs to the SHMT family. In terms of assembly, homodimer. Pyridoxal 5'-phosphate is required as a cofactor.

It is found in the cytoplasm. It catalyses the reaction (6R)-5,10-methylene-5,6,7,8-tetrahydrofolate + glycine + H2O = (6S)-5,6,7,8-tetrahydrofolate + L-serine. The protein operates within one-carbon metabolism; tetrahydrofolate interconversion. It functions in the pathway amino-acid biosynthesis; glycine biosynthesis; glycine from L-serine: step 1/1. Functionally, catalyzes the reversible interconversion of serine and glycine with tetrahydrofolate (THF) serving as the one-carbon carrier. This reaction serves as the major source of one-carbon groups required for the biosynthesis of purines, thymidylate, methionine, and other important biomolecules. Also exhibits THF-independent aldolase activity toward beta-hydroxyamino acids, producing glycine and aldehydes, via a retro-aldol mechanism. In Streptococcus pneumoniae serotype 2 (strain D39 / NCTC 7466), this protein is Serine hydroxymethyltransferase.